Reading from the N-terminus, the 297-residue chain is D-alanine--D-alanine ligase (297 aa).

An ATP-grasp domain is found at K103–E293. Position 129 to 180 (I129 to T180) interacts with ATP. Mg(2+) contacts are provided by D247, E260, and N262.

The protein belongs to the D-alanine--D-alanine ligase family. Mg(2+) is required as a cofactor. It depends on Mn(2+) as a cofactor.

Its subcellular location is the cytoplasm. It carries out the reaction 2 D-alanine + ATP = D-alanyl-D-alanine + ADP + phosphate + H(+). It functions in the pathway cell wall biogenesis; peptidoglycan biosynthesis. In terms of biological role, cell wall formation. This is D-alanine--D-alanine ligase from Francisella philomiragia subsp. philomiragia (strain ATCC 25017 / CCUG 19701 / FSC 153 / O#319-036).